A 334-amino-acid polypeptide reads, in one-letter code: O(6)-methylguanine-induced apoptosis 2 (334 aa).

The tract at residues 1–60 (MDNSAQKNERTGKHPRRASEVQKGFTAAYPTQSSIPFKSQASVIPESEKKGFNSQAKRFP) is disordered. Basic and acidic residues predominate over residues 7–20 (KNERTGKHPRRASE). The span at 29–42 (YPTQSSIPFKSQAS) shows a compositional bias: polar residues. STPGR repeat units follow at residues 67–74 (PGPGFYNV), 109–117 (PAANAYTIP), 148–155 (PAPNYYNA), 187–206 (GPPPGHYDINESLVKQSPNT), 225–257 (GPGPGYYNPSDCTKVPKKTLFPKNPILNFSAQP), 267–282 (PGPGQYEIVDYLGPRK), and 306–316 (LPGPATYKPEL). Tyr-72 carries the phosphotyrosine modification.

It belongs to the STPG1 family.

The protein resides in the cytoplasm. It localises to the nucleus. Its function is as follows. May positively contribute to the induction of apoptosis triggered by O(6)-methylguanine. The protein is O(6)-methylguanine-induced apoptosis 2 (STPG1) of Homo sapiens (Human).